A 100-amino-acid polypeptide reads, in one-letter code: Large ribosomal subunit protein bL21 (100 aa).

It belongs to the bacterial ribosomal protein bL21 family. Part of the 50S ribosomal subunit. Contacts protein L20.

Its function is as follows. This protein binds to 23S rRNA in the presence of protein L20. This Ureaplasma urealyticum serovar 10 (strain ATCC 33699 / Western) protein is Large ribosomal subunit protein bL21.